Consider the following 505-residue polypeptide: DDB1- and CUL4-associated factor 17 (505 aa).

A run of 2 helical transmembrane segments spans residues 186-206 (VLLY…ILEI) and 222-242 (GILI…QAII).

In terms of assembly, interacts with DDB1, CUL4A and CUL4B.

It is found in the membrane. Its subcellular location is the nucleus. The protein resides in the nucleolus. It functions in the pathway protein modification; protein ubiquitination. May function as a substrate receptor for CUL4-DDB1 E3 ubiquitin-protein ligase complex. This Rattus norvegicus (Rat) protein is DDB1- and CUL4-associated factor 17 (Dcaf17).